Consider the following 223-residue polypeptide: Small ribosomal subunit protein uS3 (223 aa).

Positions 39–107 (VREFLHKKLA…PVQINIEEVR (69 aa)) constitute a KH type-2 domain.

This sequence belongs to the universal ribosomal protein uS3 family. As to quaternary structure, part of the 30S ribosomal subunit. Forms a tight complex with proteins S10 and S14.

Its function is as follows. Binds the lower part of the 30S subunit head. Binds mRNA in the 70S ribosome, positioning it for translation. This Francisella tularensis subsp. holarctica (strain FTNF002-00 / FTA) protein is Small ribosomal subunit protein uS3.